We begin with the raw amino-acid sequence, 616 residues long: Dihydroxy-acid dehydratase (616 aa).

Asp-81 serves as a coordination point for Mg(2+). Position 122 (Cys-122) interacts with [2Fe-2S] cluster. Mg(2+) is bound by residues Asp-123 and Lys-124. Position 124 is an N6-carboxylysine (Lys-124). Cys-195 contributes to the [2Fe-2S] cluster binding site. Mg(2+) is bound at residue Glu-491. Catalysis depends on Ser-517, which acts as the Proton acceptor.

Belongs to the IlvD/Edd family. In terms of assembly, homodimer. It depends on [2Fe-2S] cluster as a cofactor. Mg(2+) serves as cofactor.

The enzyme catalyses (2R)-2,3-dihydroxy-3-methylbutanoate = 3-methyl-2-oxobutanoate + H2O. It catalyses the reaction (2R,3R)-2,3-dihydroxy-3-methylpentanoate = (S)-3-methyl-2-oxopentanoate + H2O. Its pathway is amino-acid biosynthesis; L-isoleucine biosynthesis; L-isoleucine from 2-oxobutanoate: step 3/4. It participates in amino-acid biosynthesis; L-valine biosynthesis; L-valine from pyruvate: step 3/4. In terms of biological role, functions in the biosynthesis of branched-chain amino acids. Catalyzes the dehydration of (2R,3R)-2,3-dihydroxy-3-methylpentanoate (2,3-dihydroxy-3-methylvalerate) into 2-oxo-3-methylpentanoate (2-oxo-3-methylvalerate) and of (2R)-2,3-dihydroxy-3-methylbutanoate (2,3-dihydroxyisovalerate) into 2-oxo-3-methylbutanoate (2-oxoisovalerate), the penultimate precursor to L-isoleucine and L-valine, respectively. This is Dihydroxy-acid dehydratase from Shewanella woodyi (strain ATCC 51908 / MS32).